The chain runs to 284 residues: 2-dehydro-3-deoxyphosphooctonate aldolase (284 aa).

Belongs to the KdsA family.

The protein localises to the cytoplasm. It carries out the reaction D-arabinose 5-phosphate + phosphoenolpyruvate + H2O = 3-deoxy-alpha-D-manno-2-octulosonate-8-phosphate + phosphate. It functions in the pathway carbohydrate biosynthesis; 3-deoxy-D-manno-octulosonate biosynthesis; 3-deoxy-D-manno-octulosonate from D-ribulose 5-phosphate: step 2/3. Its pathway is bacterial outer membrane biogenesis; lipopolysaccharide biosynthesis. The protein is 2-dehydro-3-deoxyphosphooctonate aldolase of Synechococcus sp. (strain ATCC 27144 / PCC 6301 / SAUG 1402/1) (Anacystis nidulans).